A 343-amino-acid chain; its full sequence is MKIKALSKLKPEEGIWMTEVEKPEMGHNDLLIRIKKTAICGTDVHIYNWDEWSQNTIPVPMVVGHEYVGEVVGIGQEVRGFEIGDRVSGEGHITCGHCRNCRGGRTHLCRNTTGVGVNRTGAFSEFLVIPAFNAFKIPAEISDDLASIFDPFGNAVHTALSFDLVGEDVLITGAGPIGIMAAAVAKHVGARHVVITDVNEYRLDLARQMGVTRAVNVMEEKLEDVMSDLGMTEGFDVGLEMSGNPSAFNSMLTNMNHGGKISLLGIPPSDMAVDWNQVIFKGLVIKGIYGREMFETWYKMASLIQSGLDLTPIITHHYKVDDFQKGFDMMRSGMSGKVILDWE.

Cysteine 40 provides a ligand contact to Zn(2+). Active-site charge relay system residues include threonine 42 and histidine 45. Zn(2+) contacts are provided by histidine 65, glutamate 66, cysteine 95, cysteine 98, cysteine 101, and cysteine 109. Residues isoleucine 177, aspartate 197, arginine 202, leucine 264–isoleucine 266, and isoleucine 288–tyrosine 289 each bind NAD(+).

The protein belongs to the zinc-containing alcohol dehydrogenase family. Homotetramer. It depends on Zn(2+) as a cofactor.

Its subcellular location is the cytoplasm. It carries out the reaction L-threonine + NAD(+) = (2S)-2-amino-3-oxobutanoate + NADH + H(+). Its pathway is amino-acid degradation; L-threonine degradation via oxydo-reductase pathway; glycine from L-threonine: step 1/2. Catalyzes the NAD(+)-dependent oxidation of L-threonine to 2-amino-3-ketobutyrate. This is L-threonine 3-dehydrogenase from Vibrio atlanticus (strain LGP32) (Vibrio splendidus (strain Mel32)).